A 203-amino-acid chain; its full sequence is Cytochrome c biogenesis ATP-binding export protein CcmA (203 aa).

Residues 2–203 form the ABC transporter domain; the sequence is LEALDLAGVR…KTSQTVRMGA (202 aa). An ATP-binding site is contributed by 34–41; the sequence is GENGSGKT.

It belongs to the ABC transporter superfamily. CcmA exporter (TC 3.A.1.107) family. In terms of assembly, the complex is composed of two ATP-binding proteins (CcmA) and two transmembrane proteins (CcmB).

It localises to the cell inner membrane. The catalysed reaction is heme b(in) + ATP + H2O = heme b(out) + ADP + phosphate + H(+). In terms of biological role, part of the ABC transporter complex CcmAB involved in the biogenesis of c-type cytochromes; once thought to export heme, this seems not to be the case, but its exact role is uncertain. Responsible for energy coupling to the transport system. This Pseudomonas aeruginosa protein is Cytochrome c biogenesis ATP-binding export protein CcmA.